The sequence spans 189 residues: Peptidyl-tRNA hydrolase (189 aa).

Y15 lines the tRNA pocket. The active-site Proton acceptor is the H20. Positions 66, 68, and 114 each coordinate tRNA.

This sequence belongs to the PTH family. In terms of assembly, monomer.

The protein resides in the cytoplasm. It catalyses the reaction an N-acyl-L-alpha-aminoacyl-tRNA + H2O = an N-acyl-L-amino acid + a tRNA + H(+). Hydrolyzes ribosome-free peptidyl-tRNAs (with 1 or more amino acids incorporated), which drop off the ribosome during protein synthesis, or as a result of ribosome stalling. Functionally, catalyzes the release of premature peptidyl moieties from peptidyl-tRNA molecules trapped in stalled 50S ribosomal subunits, and thus maintains levels of free tRNAs and 50S ribosomes. This chain is Peptidyl-tRNA hydrolase, found in Streptococcus mutans serotype c (strain ATCC 700610 / UA159).